Reading from the N-terminus, the 97-residue chain is Sorbitol dehydrogenase (97 aa).

Residue Cys-44 participates in Zn(2+) binding. Tyr-50 serves as a coordination point for substrate. His-69 and Glu-70 together coordinate Zn(2+).

The protein belongs to the zinc-containing alcohol dehydrogenase family. In terms of assembly, homotetramer. Zn(2+) serves as cofactor.

It localises to the mitochondrion membrane. Its subcellular location is the cell projection. The protein resides in the cilium. It is found in the flagellum. The catalysed reaction is xylitol + NAD(+) = D-xylulose + NADH + H(+). It catalyses the reaction L-iditol + NAD(+) = keto-L-sorbose + NADH + H(+). It carries out the reaction keto-D-fructose + NADH + H(+) = D-sorbitol + NAD(+). Functionally, polyol dehydrogenase that catalyzes the reversible NAD(+)-dependent oxidation of various sugar alcohols. Is active with xylitol, L-iditol and D-sorbitol (D-glucitol) as substrates, leading to the C2-oxidized products D-xylulose, L-sorbose and D-fructose, respectively. Is a key enzyme in the polyol pathway that interconverts glucose and fructose via sorbitol, which constitutes an important alternate route for glucose metabolism. May play a role in sperm motility by using sorbitol as an alternative energy source for sperm motility. The polypeptide is Sorbitol dehydrogenase (SORD) (Sus scrofa (Pig)).